The chain runs to 187 residues: UPF0398 protein SAB1311c (187 aa).

Belongs to the UPF0398 family.

In Staphylococcus aureus (strain bovine RF122 / ET3-1), this protein is UPF0398 protein SAB1311c.